We begin with the raw amino-acid sequence, 509 residues long: MEEIQGYLQRKRSQQQDFLYPLIFQEYIYAFAHARGFSRLILSENPGYDNKSSLLLVKRLITRMYQQNHFLICPNDSNQNPFLARNKNLYSQIISEGFAFIVEIPFSLRLISCLEVKKIVKSQTLRSIHSIFPFLEDNFSHLNFVLDVLIPHPVHVEILVQTLRYWLKDASSLHLLRFFLNEYCNWNSFILPKKDGSSFSKRNQRLFLFLYNSHVWEYESIFVFLRNQSAHLRSTSSGVLLERIYFYGKMERLVNVFVKVKDFRSNPRLIKEPCMHYIRYQRKSILASKGMSLFMNKWKCYLVTLWQWHFSLWFQPRRIYINQLANHSFEFLGYLSSVRMNPSVIRSQILENAFLINNAIKKFDTLVPIIPLIMSLAKAKFCNVLGHPISKPVWADLSDSNIIDRFRRICRNFSHYHSGSSTKRSLYQIKYILRLSCARTLARKHKSTVRVFLKRSDSELLEEFFMSEEGVLFCTFQKAFSTLRGIYRSRVWYLDIFSINDLANHKSRF.

Belongs to the intron maturase 2 family. MatK subfamily.

It is found in the plastid. The protein localises to the chloroplast. Functionally, usually encoded in the trnK tRNA gene intron. Probably assists in splicing its own and other chloroplast group II introns. The sequence is that of Maturase K from Avicennia marina (Grey mangrove).